A 670-amino-acid chain; its full sequence is UvrABC system protein B (670 aa).

One can recognise a Helicase ATP-binding domain in the interval 26-414 (EGLEDGLAHQ…GGDVIDQVVR (389 aa)). 39 to 46 (GVTGSGKT) contacts ATP. Positions 92–115 (YYDYYQPEAYVPSSDTFIEKDASV) match the Beta-hairpin motif. Positions 431–597 (QVDDLLSEIR…GINKKISDIL (167 aa)) constitute a Helicase C-terminal domain. Positions 630–665 (ELKIRELESKMLTHAQNLEFEEAAALRDEVQVLRAQ) constitute a UVR domain.

Belongs to the UvrB family. Forms a heterotetramer with UvrA during the search for lesions. Interacts with UvrC in an incision complex.

The protein resides in the cytoplasm. The UvrABC repair system catalyzes the recognition and processing of DNA lesions. A damage recognition complex composed of 2 UvrA and 2 UvrB subunits scans DNA for abnormalities. Upon binding of the UvrA(2)B(2) complex to a putative damaged site, the DNA wraps around one UvrB monomer. DNA wrap is dependent on ATP binding by UvrB and probably causes local melting of the DNA helix, facilitating insertion of UvrB beta-hairpin between the DNA strands. Then UvrB probes one DNA strand for the presence of a lesion. If a lesion is found the UvrA subunits dissociate and the UvrB-DNA preincision complex is formed. This complex is subsequently bound by UvrC and the second UvrB is released. If no lesion is found, the DNA wraps around the other UvrB subunit that will check the other stand for damage. This Pectobacterium atrosepticum (strain SCRI 1043 / ATCC BAA-672) (Erwinia carotovora subsp. atroseptica) protein is UvrABC system protein B.